The following is an 85-amino-acid chain: Toxin TdNa8 (85 aa).

Residues 1-19 (MNYLTLIAAASLLTAGTES) form the signal peptide. The LCN-type CS-alpha/beta domain occupies 21–81 (KDGYPVKEGD…AAIKGYGRCR (61 aa)). Intrachain disulfides connect Cys31–Cys80, Cys35–Cys56, Cys42–Cys63, and Cys46–Cys65. The residue at position 82 (Pro82) is a Proline amide.

It belongs to the long (4 C-C) scorpion toxin superfamily. Sodium channel inhibitor family. Alpha subfamily. Expressed by the venom gland.

It localises to the secreted. Functionally, alpha toxins bind voltage-independently at site-3 of sodium channels (Nav) and inhibit the inactivation of the activated channels, thereby blocking neuronal transmission. This is Toxin TdNa8 from Tityus discrepans (Venezuelan scorpion).